The sequence spans 365 residues: Putative ankyrin repeat protein R903 (365 aa).

10 ANK repeats span residues Asn38–Phe67, Gln68–Ile97, Asn99–Asn127, Ser129–Lys158, Lys184–Thr213, Val214–Arg243, Ser245–Asp273, Leu275–Val298, Asn299–Glu328, and Arg330–Ser361.

This chain is Putative ankyrin repeat protein R903, found in Acanthamoeba polyphaga mimivirus (APMV).